Here is a 64-residue protein sequence, read N- to C-terminus: DNA gyrase inhibitor YacG (64 aa).

Residues Cys-9, Cys-12, Cys-28, and Cys-32 each contribute to the Zn(2+) site.

Belongs to the DNA gyrase inhibitor YacG family. As to quaternary structure, interacts with GyrB. It depends on Zn(2+) as a cofactor.

In terms of biological role, inhibits all the catalytic activities of DNA gyrase by preventing its interaction with DNA. Acts by binding directly to the C-terminal domain of GyrB, which probably disrupts DNA binding by the gyrase. In Enterobacter sp. (strain 638), this protein is DNA gyrase inhibitor YacG.